A 154-amino-acid chain; its full sequence is Endoribonuclease YbeY (154 aa).

Positions 117, 121, and 127 each coordinate Zn(2+).

The protein belongs to the endoribonuclease YbeY family. Zn(2+) serves as cofactor.

The protein localises to the cytoplasm. Functionally, single strand-specific metallo-endoribonuclease involved in late-stage 70S ribosome quality control and in maturation of the 3' terminus of the 16S rRNA. The polypeptide is Endoribonuclease YbeY (Mycoplasma pneumoniae (strain ATCC 29342 / M129 / Subtype 1) (Mycoplasmoides pneumoniae)).